Reading from the N-terminus, the 947-residue chain is MTPLSSPLSQYWQTVVERLPEGFTETSLSVQAKSVLTFSDFALDSVIAHPEWLAELESASPQADEWRHYAGWLQEALAGVCDDASLMRELRFFRRRIMVRIAWAQTLSLVDDETILQQLSHLAETLIVGARDWLYAACCREWGTPCNPQGVPQPLLILGMGKLGGGELNFSSDIDLIFAWPEHGETRGGRRELDNAQFFTRLGQRLIKALDQPTMDGFVYRVDMRLRPFGDSGPLVLSFAALEDYYQEQGRDWERYAMVKARLMGDNDDAWSRELRAMLRPFVFRRYIDFSVIQSLRNMKGMIAREVRRRGLKDNIKLGAGGIREIEFIVQVFQLIRGGREPSLQSRSLLPTLDAIAALHLLPENDVAQLRVAYLFLRRLENLLQSINDEQTQTLPADDLNRARLAWGMKAENWPQLVGELTDHMANVRRVFNELIGDDEADTPQEEERSEPWRDVWQDALQEDDSTPVLAHLADEDRRQVLTLIADFRKELDKRPIGPRGRQVLDQLMPHLLADVCSREDAAVTLSRITPLLAGIVTRTTYLELLSEFPGALKHLIMLCAASPMIASQLARYPLLLDELLDPGTLYQPTATDAYRDELRQYLLRVPEEDEEQQLEALRQFKQAQLLRIAAADIAGTLPVMKVSDHLTWLAEAMIDAVVQQAWTQMVARYGQPAHLDERQGRGFAVVGYGKLGGWELGYSSDLDLIFLHDCPMDVMTNGEREIDGRQFYLRLAQRIMHLFSTRTSSGILYEVDARLRPSGAAGMLVTSADAFADYQQHEAWTWEHQALVRARVVYGDPQLTSQFDTVRRTIMTTARDGKTLQTEVREMREKMRAHLGNKHRDRFDIKADEGGITDIEFIAQYLVLRYAHEKPKLTRWSDNVRILELLAQNGIMDEHEAQALTVAYTTLRDELHHLALQELPGHVAQTCFSKERALVQASWRKWLVAV.

The interval 1–440 (MTPLSSPLSQ…VFNELIGDDE (440 aa)) is adenylyl removase. Residues 450–947 (SEPWRDVWQD…ASWRKWLVAV (498 aa)) are adenylyl transferase.

This sequence belongs to the GlnE family. It depends on Mg(2+) as a cofactor.

The enzyme catalyses [glutamine synthetase]-O(4)-(5'-adenylyl)-L-tyrosine + phosphate = [glutamine synthetase]-L-tyrosine + ADP. It carries out the reaction [glutamine synthetase]-L-tyrosine + ATP = [glutamine synthetase]-O(4)-(5'-adenylyl)-L-tyrosine + diphosphate. Involved in the regulation of glutamine synthetase GlnA, a key enzyme in the process to assimilate ammonia. When cellular nitrogen levels are high, the C-terminal adenylyl transferase (AT) inactivates GlnA by covalent transfer of an adenylyl group from ATP to specific tyrosine residue of GlnA, thus reducing its activity. Conversely, when nitrogen levels are low, the N-terminal adenylyl removase (AR) activates GlnA by removing the adenylyl group by phosphorolysis, increasing its activity. The regulatory region of GlnE binds the signal transduction protein PII (GlnB) which indicates the nitrogen status of the cell. This Salmonella dublin (strain CT_02021853) protein is Bifunctional glutamine synthetase adenylyltransferase/adenylyl-removing enzyme.